Reading from the N-terminus, the 340-residue chain is Ketol-acid reductoisomerase (NADP(+)) (340 aa).

The region spanning 3 to 182 (VEMLYEADVK…GSARVGLLVT (180 aa)) is the KARI N-terminal Rossmann domain. NADP(+) contacts are provided by residues 26-29 (YGSQ), Arg-49, Ser-53, and 83-86 (DEIQ). His-108 is a catalytic residue. Gly-134 provides a ligand contact to NADP(+). The KARI C-terminal knotted domain maps to 183–328 (TFKEETEEDL…AELRKAMPFV (146 aa)). Residues Asp-191, Glu-195, Glu-227, and Glu-231 each coordinate Mg(2+). Ser-252 lines the substrate pocket.

The protein belongs to the ketol-acid reductoisomerase family. Mg(2+) serves as cofactor.

It catalyses the reaction (2R)-2,3-dihydroxy-3-methylbutanoate + NADP(+) = (2S)-2-acetolactate + NADPH + H(+). The enzyme catalyses (2R,3R)-2,3-dihydroxy-3-methylpentanoate + NADP(+) = (S)-2-ethyl-2-hydroxy-3-oxobutanoate + NADPH + H(+). It participates in amino-acid biosynthesis; L-isoleucine biosynthesis; L-isoleucine from 2-oxobutanoate: step 2/4. The protein operates within amino-acid biosynthesis; L-valine biosynthesis; L-valine from pyruvate: step 2/4. In terms of biological role, involved in the biosynthesis of branched-chain amino acids (BCAA). Catalyzes an alkyl-migration followed by a ketol-acid reduction of (S)-2-acetolactate (S2AL) to yield (R)-2,3-dihydroxy-isovalerate. In the isomerase reaction, S2AL is rearranged via a Mg-dependent methyl migration to produce 3-hydroxy-3-methyl-2-ketobutyrate (HMKB). In the reductase reaction, this 2-ketoacid undergoes a metal-dependent reduction by NADPH to yield (R)-2,3-dihydroxy-isovalerate. The sequence is that of Ketol-acid reductoisomerase (NADP(+)) from Streptococcus mutans serotype c (strain ATCC 700610 / UA159).